The following is a 143-amino-acid chain: Sporulation-specific protein 73 (143 aa).

This sequence belongs to the SPO73 family. Interacts with SPO71.

It is found in the cytoplasm. The protein localises to the prospore membrane. Functionally, required for spore wall assembly and ascus formation. Involved in the formation and elongation of prospore membranes. This chain is Sporulation-specific protein 73, found in Saccharomyces cerevisiae (strain ATCC 204508 / S288c) (Baker's yeast).